The following is a 504-amino-acid chain: ATP synthase subunit alpha (504 aa).

169 to 176 (GDRQTGKT) is a binding site for ATP.

Belongs to the ATPase alpha/beta chains family. In terms of assembly, F-type ATPases have 2 components, CF(1) - the catalytic core - and CF(0) - the membrane proton channel. CF(1) has five subunits: alpha(3), beta(3), gamma(1), delta(1), epsilon(1). CF(0) has three main subunits: a(1), b(2) and c(9-12). The alpha and beta chains form an alternating ring which encloses part of the gamma chain. CF(1) is attached to CF(0) by a central stalk formed by the gamma and epsilon chains, while a peripheral stalk is formed by the delta and b chains.

The protein resides in the cell membrane. The enzyme catalyses ATP + H2O + 4 H(+)(in) = ADP + phosphate + 5 H(+)(out). Produces ATP from ADP in the presence of a proton gradient across the membrane. The alpha chain is a regulatory subunit. The polypeptide is ATP synthase subunit alpha (Clostridium kluyveri (strain NBRC 12016)).